Reading from the N-terminus, the 967-residue chain is MPFTLGQRWISDTESELGLGTVVAIDARMVTLLFPACGENRLYSRHDAPITRVMFNVGDTVTSHEGWKLAIDNVVEDNGLLIYHGVRLDTEEPAQLREVFLDNKLTFNKPQDRLFAGQIDRMDRFALRYRARKFMSEQFKQAQSGLRGIRASLIPHQLYIANEVGKRHNPRVLLADEVGLGKTIEAGMIIHQQIMDGRAERVLIIVPESLQHQWLVEMLRRFNLRFSLFDDSRYSESLLDSDNPFETEQMIICSLDFVRKNKQRFEHLVEATWDMLVVDEAHHLVWSEKAPSREYQVIETLAEAIPSVLLLTATPEQLGQESHFARLRLLDPNRFHDYNEFINEQQKYRPVADAVTILLSEDDLNNEQQNSISEMISEQDIEPLLKASNTQGEERTKSRQALIHMLMDRHGTGRLLFRNTRSGVKGFPNRLLHAIKMPLPTQYQTAIKVAEIMAAKKSLEVRAKEMLYPERIYQEFEGENATWWNFDPRVEWLLGFLTANRHEKVLVICAQAATALQLEQVLREREGIRAAVFHEGMSLLERDRAAAYFASEEEGAQVLLCSEIGSEGRNFQFANQLVMFDLPFNPDLLEQRIGRLDRIGQNRDIDISVPYLEGTAQSVLLRWYHEGLDAFEHTCPTGRTIYDNEYDALVNYLAQPNELGDFDKFIVSCRKQHDEMKLKLEQGRDRLLEMHSNGGEVGVELANKIAEQDNDPDLVNFALNLFDIVGINQEDRSDSLIVLTPSDHMLVPDFPGLPQDGCTITFDREHALSREDTQFISWEHPIIRNGLDLVLSGDTGSCAVSLLKNKALPVGTLLVELIYVVEAQAPKHLHLTRFLPATPVRLLLDLKGNNLASQVEFESFNRQLNAVNRHTSSKLVNAVQNEVHHVLKASESLMEAEAKTLIEQAKQEADNALTHELSRLEALRAVNPNIRDDEVEAIENERTHILNHLDEATWRLDAIRLIVVTHQ.

Residues 163-333 (EVGKRHNPRV…FARLRLLDPN (171 aa)) enclose the Helicase ATP-binding domain. 176-183 (DEVGLGKT) serves as a coordination point for ATP. The DEAH box signature appears at 279 to 282 (DEAH). The region spanning 489-660 (RVEWLLGFLT…NYLAQPNELG (172 aa)) is the Helicase C-terminal domain.

It belongs to the SNF2/RAD54 helicase family. RapA subfamily. Interacts with the RNAP. Has a higher affinity for the core RNAP than for the holoenzyme. Its ATPase activity is stimulated by binding to RNAP.

In terms of biological role, transcription regulator that activates transcription by stimulating RNA polymerase (RNAP) recycling in case of stress conditions such as supercoiled DNA or high salt concentrations. Probably acts by releasing the RNAP, when it is trapped or immobilized on tightly supercoiled DNA. Does not activate transcription on linear DNA. Probably not involved in DNA repair. The chain is RNA polymerase-associated protein RapA from Proteus mirabilis (strain HI4320).